The sequence spans 124 residues: Glycine cleavage system H protein (124 aa).

Positions 19–101 constitute a Lipoyl-binding domain; that stretch reads VATVGITDHA…ESGAWFFRMT (83 aa). Lys-60 is modified (N6-lipoyllysine).

The protein belongs to the GcvH family. The glycine cleavage system is composed of four proteins: P, T, L and H. Requires (R)-lipoate as cofactor.

Its function is as follows. The glycine cleavage system catalyzes the degradation of glycine. The H protein shuttles the methylamine group of glycine from the P protein to the T protein. The sequence is that of Glycine cleavage system H protein from Acidiphilium cryptum (strain JF-5).